The sequence spans 170 residues: Probable T4-type lysozyme 2 (170 aa).

The Proton donor role is filled by glutamate 13. Aspartate 22 functions as the Nucleophile in the catalytic mechanism.

Belongs to the glycosyl hydrolase 24 family.

The enzyme catalyses Hydrolysis of (1-&gt;4)-beta-linkages between N-acetylmuramic acid and N-acetyl-D-glucosamine residues in a peptidoglycan and between N-acetyl-D-glucosamine residues in chitodextrins.. The sequence is that of Probable T4-type lysozyme 2 from Dictyostelium discoideum (Social amoeba).